The following is a 236-amino-acid chain: GLIPR1-like protein 1 (236 aa).

The first 27 residues, 1 to 27, serve as a signal peptide directing secretion; sequence MALKKKLNFLWTLVLYLIASRLPKAFG. An SCP domain is found at 46-178; the sequence is LNIHNELRRK…FSAGLFVCNY (133 aa). Asparagine 126 is a glycosylation site (N-linked (GlcNAc...) asparagine).

Belongs to the CRISP family. As to quaternary structure, part of a oolemmal binding multimeric complex (IZUMO1 complex) composed at least of IZUMO1 and GLIPR1L1; the complex assemblage is influenced by the maturation status of the male germ cell. Interacts with IZUMO1. N-glycosylated. N-glycosylation decreases during the transit in the caput. As to expression, expressed in testis (at protein level). Little or no expression in other tissues tested.

The protein resides in the cytoplasmic vesicle. It is found in the secretory vesicle. Its subcellular location is the acrosome. The protein localises to the cell membrane. It localises to the membrane raft. The protein resides in the secreted. Its function is as follows. Required for optimal fertilization at the stage of sperm-oocyte fusion, plays a role in optimizing acrosome function, the translocation of IZUMO1 during the acrosome reaction and the fertilization process. Component of epididymosomes, one type of membranous microvesicules which mediate the transfer of lipids and proteins to spermatozoa plasma membrane during epididymal maturation. Also component of the CD9-positive microvesicules found in the cauda region. The protein is GLIPR1-like protein 1 of Mus musculus (Mouse).